The following is a 487-amino-acid chain: Glutamyl-tRNA(Gln) amidotransferase subunit A (487 aa).

Catalysis depends on charge relay system residues K75 and S150. S174 serves as the catalytic Acyl-ester intermediate.

The protein belongs to the amidase family. GatA subfamily. As to quaternary structure, heterotrimer of A, B and C subunits.

The enzyme catalyses L-glutamyl-tRNA(Gln) + L-glutamine + ATP + H2O = L-glutaminyl-tRNA(Gln) + L-glutamate + ADP + phosphate + H(+). Functionally, allows the formation of correctly charged Gln-tRNA(Gln) through the transamidation of misacylated Glu-tRNA(Gln) in organisms which lack glutaminyl-tRNA synthetase. The reaction takes place in the presence of glutamine and ATP through an activated gamma-phospho-Glu-tRNA(Gln). This chain is Glutamyl-tRNA(Gln) amidotransferase subunit A, found in Syntrophomonas wolfei subsp. wolfei (strain DSM 2245B / Goettingen).